A 359-amino-acid polypeptide reads, in one-letter code: Peptide chain release factor 1 (359 aa).

Gln-238 carries the N5-methylglutamine modification.

This sequence belongs to the prokaryotic/mitochondrial release factor family. Methylated by PrmC. Methylation increases the termination efficiency of RF1.

It is found in the cytoplasm. Peptide chain release factor 1 directs the termination of translation in response to the peptide chain termination codons UAG and UAA. This is Peptide chain release factor 1 from Mycoplasmopsis pulmonis (strain UAB CTIP) (Mycoplasma pulmonis).